The sequence spans 784 residues: Rabenosyn-5 (784 aa).

An N-acetylalanine modification is found at Ala-2. The residue at position 3 (Ser-3) is a Phosphoserine. A C2H2-type zinc finger spans residues 14–37; that stretch reads FLCPLCLKDLQSFYQLHSHYEEEH. Positions 100 to 263 are necessary for the correct targeting to endosomes; sequence RSHLSDFKKH…HCKDTLLKRE (164 aa). The FYVE-type zinc finger occupies 157–260; that stretch reads DQDVPFCPDC…CCTHCKDTLL (104 aa). 6 residues coordinate Zn(2+): Cys-163, Cys-166, Cys-179, Cys-182, Cys-187, and Cys-190. Residues 207-224 are compositionally biased toward polar residues; sequence KESLSTHTSPSQSPNSVH. Residues 207-241 form a disordered region; that stretch reads KESLSTHTSPSQSPNSVHGSRRGSISSMSSVSSVL. Ser-215, Ser-219, Ser-226, and Ser-230 each carry phosphoserine. The segment covering 228–240 has biased composition (low complexity); it reads RGSISSMSSVSSV. Zn(2+)-binding residues include Cys-252 and Cys-255. The necessary for interaction with RAB4A stretch occupies residues 264–500; it reads QQIDEKEHTP…QLQDEYDQQQ (237 aa). Residues 264 to 784 are necessary for interaction with EHD1; sequence QQIDEKEHTP…TLAKQKGGTD (521 aa). Coiled-coil stretches lie at residues 378–414 and 472–531; these read TKEQ…LEER and QAKA…RELE. Basic and acidic residues predominate over residues 390-400; that stretch reads KEEMERKRAVE. Positions 390–429 are disordered; that stretch reads KEEMERKRAVERQAALESQRRLEERQSGLASRAANGEVAS. Residues 496–515 form the UIM domain; sequence YDQQQTEKAIELSRRQAEEE. A disordered region spans residues 574–732; that stretch reads DLGSSPVPSS…DSDSGPEAEE (159 aa). Over residues 579 to 598 the composition is skewed to polar residues; sequence PVPSSTAPKTPSLSSTQPTR. Residues 627-784 are necessary for interaction with RAB5A; it reads PFDEEDLSSP…TLAKQKGGTD (158 aa). Positions 663–673 are enriched in acidic residues; sequence PFEEEDEEEEA. Ser-684 is modified (phosphoserine). Over residues 722–732 the composition is skewed to acidic residues; sequence MDSDSGPEAEE.

As to quaternary structure, interacts with EHD1, RAB4A, RAB5A, RAB14, RAB22A, RAB24 and VPS45. Binds simultaneously to RAB4A and RAB5A in vitro. Interacts with RAB4A and RAB5A that has been activated by GTP binding.

It is found in the cell membrane. The protein localises to the early endosome membrane. Functionally, rab4/Rab5 effector protein acting in early endocytic membrane fusion and membrane trafficking of recycling endosomes. Required for endosome fusion either homotypically or with clathrin coated vesicles. Plays a role in the lysosomal trafficking of CTSD/cathepsin D from the Golgi to lysosomes. Also promotes the recycling of transferrin directly from early endosomes to the plasma membrane. Binds phospholipid vesicles containing phosphatidylinositol 3-phosphate (PtdInsP3). Plays a role in the recycling of transferrin receptor to the plasma membrane. The chain is Rabenosyn-5 from Homo sapiens (Human).